Consider the following 70-residue polypeptide: MLVLSRKKNESIVINNDIKIVVVEIRGDKVRLGVEAPREVPVHRREVYDAIQRNNEAFDANAPADSNDVS.

This sequence belongs to the CsrA/RsmA family. In terms of assembly, homodimer; the beta-strands of each monomer intercalate to form a hydrophobic core, while the alpha-helices form wings that extend away from the core.

Its subcellular location is the cytoplasm. A translational regulator that binds mRNA to regulate translation initiation and/or mRNA stability. Usually binds in the 5'-UTR at or near the Shine-Dalgarno sequence preventing ribosome-binding, thus repressing translation. Its main target seems to be the major flagellin gene, while its function is anatagonized by FliW. The protein is Translational regulator CsrA of Rhodopirellula baltica (strain DSM 10527 / NCIMB 13988 / SH1).